Reading from the N-terminus, the 416-residue chain is Transcription factor LATE FLOWERING (416 aa).

Low complexity-rich tracts occupy residues 176–186 and 200–212; these read STTTTTTALPP and TSPT…TSET. 2 disordered regions span residues 176 to 226 and 276 to 311; these read STTT…AGGS and LGGP…QTVA. The basic motif; degenerate stretch occupies residues 303 to 316; that stretch reads ISSDPQTVAARLRR. The region spanning 303 to 352 is the bHLH domain; it reads ISSDPQTVAARLRRERVSERLRVLQRLVPGGSKMDTATMLDEAASYLKFL. Residues 317 to 352 form a helix-loop-helix motif region; the sequence is ERVSERLRVLQRLVPGGSKMDTATMLDEAASYLKFL.

It belongs to the bHLH protein family. In terms of assembly, interacts with PIL13 and PIL15.

The protein localises to the nucleus. Functionally, transcription factor involved in the negative regulation of flowering. May be involved in the repression of the flowering factor GI and HD1 by interacting with PIL13 and PIL15 and competing with PRR1. Possesses transactivation activity in yeast. The chain is Transcription factor LATE FLOWERING from Oryza sativa subsp. japonica (Rice).